A 333-amino-acid chain; its full sequence is MLNAILVPVGILGVFGLIFGIGLAIAAKVFEVYEDPRVPLVRAALPGANCGGCGLPGCDALAANIVGGSAAIDACPVGGASCAAAVAEIMGMEAGSAVKKVATVICQGTCETAPNRAEYYGEMDCREAMIASGGSKGCRYGCLGYGTCKAVCPFDAIVIGEDGLPKVDPEKCTSCGKCVEACPKSIMTLVPEAQEVIVKCHNFDKGKIARLSCTTACIACGACVKACRFDAITVENNCAKIDYDKCRQCYECVDKCPMNCISGDVEYGKSTAYIIEENCIACGLCAKNCPVNAITGEIKKPPYVIDHDMCIGCGICFDKCRKSAIEMRPNKTK.

A hydrophobic region spans residues 1-27 (MLNAILVPVGILGVFGLIFGIGLAIAA). Residues 33–92 (YEDPRVPLVRAALPGANCGGCGLPGCDALAANIVGGSAAIDACPVGGASCAAAVAEIMGM) form the 4Fe-4S domain. Residues C50, C53, C58, C75, C138, C142, C148, C152, C172, C175, C178, C182, C217, C220, C223, C227, C246, C249, C252, C256, C279, C282, C285, C289, C310, C313, C316, and C320 each coordinate [4Fe-4S] cluster. 4Fe-4S ferredoxin-type domains are found at residues 126-162 (REAM…IGED), 163-192 (GLPK…LVPE), 207-237 (KIAR…VENN), 239-266 (AKID…GDVE), 270-299 (STAY…GEIK), and 301-330 (PPYV…MRPN).

This sequence belongs to the 4Fe4S bacterial-type ferredoxin family. RnfB subfamily. In terms of assembly, the complex is composed of six subunits: RnfA, RnfB, RnfC, RnfD, RnfE and RnfG. It depends on [4Fe-4S] cluster as a cofactor.

The protein resides in the cell membrane. It carries out the reaction 2 reduced [2Fe-2S]-[ferredoxin] + Na(+)(in) + NAD(+) + H(+) = 2 oxidized [2Fe-2S]-[ferredoxin] + Na(+)(out) + NADH. In terms of biological role, part of a membrane-bound complex that couples electron transfer with translocation of ions across the membrane. Couples electron transfer from reduced ferredoxin to NAD(+) with electrogenic movement of Na(+) out of the cell. Involved in caffeate respiration. In Acetobacterium woodii (strain ATCC 29683 / DSM 1030 / JCM 2381 / KCTC 1655 / WB1), this protein is Na(+)-translocating ferredoxin:NAD(+) oxidoreductase complex subunit B.